A 509-amino-acid polypeptide reads, in one-letter code: 2,3-bisphosphoglycerate-independent phosphoglycerate mutase (509 aa).

Mn(2+) is bound at residue aspartate 11. A Phosphotyrosine modification is found at tyrosine 35. Serine 61 contributes to the Mn(2+) binding site. The Phosphoserine intermediate role is filled by serine 61. Substrate-binding positions include histidine 122, 152–153, arginine 184, arginine 190, 260–263, and lysine 335; these read RD and RPDR. Residues aspartate 402, histidine 406, aspartate 443, histidine 444, and histidine 461 each coordinate Mn(2+).

It belongs to the BPG-independent phosphoglycerate mutase family. Monomer. The cofactor is Mn(2+).

The catalysed reaction is (2R)-2-phosphoglycerate = (2R)-3-phosphoglycerate. It functions in the pathway carbohydrate degradation; glycolysis; pyruvate from D-glyceraldehyde 3-phosphate: step 3/5. In terms of biological role, essential for rapid growth and for sporulation. Catalyzes the interconversion of 2-phosphoglycerate and 3-phosphoglycerate. The sequence is that of 2,3-bisphosphoglycerate-independent phosphoglycerate mutase from Bacillus thuringiensis (strain Al Hakam).